A 380-amino-acid chain; its full sequence is Cytochrome b (380 aa).

Helical transmembrane passes span 34-54 (FGSL…LLAM), 78-99 (WLIR…FLHI), 114-134 (WNTG…GYVL), and 179-199 (FFAL…IHLT). The heme b site is built by H84 and H98. Heme b is bound by residues H183 and H197. H202 serves as a coordination point for a ubiquinone. Transmembrane regions (helical) follow at residues 227-247 (IKDI…ALFS), 289-309 (LGGV…PFLH), 321-341 (LSQT…WIGS), and 348-368 (FIII…ILFP).

This sequence belongs to the cytochrome b family. In terms of assembly, the cytochrome bc1 complex contains 11 subunits: 3 respiratory subunits (MT-CYB, CYC1 and UQCRFS1), 2 core proteins (UQCRC1 and UQCRC2) and 6 low-molecular weight proteins (UQCRH/QCR6, UQCRB/QCR7, UQCRQ/QCR8, UQCR10/QCR9, UQCR11/QCR10 and a cleavage product of UQCRFS1). This cytochrome bc1 complex then forms a dimer. Heme b is required as a cofactor.

It is found in the mitochondrion inner membrane. Component of the ubiquinol-cytochrome c reductase complex (complex III or cytochrome b-c1 complex) that is part of the mitochondrial respiratory chain. The b-c1 complex mediates electron transfer from ubiquinol to cytochrome c. Contributes to the generation of a proton gradient across the mitochondrial membrane that is then used for ATP synthesis. This is Cytochrome b (MT-CYB) from Alectoris chukar (Chukar partridge).